We begin with the raw amino-acid sequence, 24 residues long: Acidic phospholipase A2 4 (24 aa).

Belongs to the phospholipase A2 family. Group II subfamily. The cofactor is Ca(2+). Expressed by the venom gland.

It is found in the secreted. It catalyses the reaction a 1,2-diacyl-sn-glycero-3-phosphocholine + H2O = a 1-acyl-sn-glycero-3-phosphocholine + a fatty acid + H(+). Its function is as follows. PLA2 catalyzes the calcium-dependent hydrolysis of the 2-acyl groups in 3-sn-phosphoglycerides. This chain is Acidic phospholipase A2 4, found in Trimeresurus stejnegeri (Chinese green tree viper).